Consider the following 422-residue polypeptide: Synaptotagmin-1 (422 aa).

Topologically, residues 1-57 are vesicular; that stretch reads MVSESHHEALAAPPVTTVATVLPSNATEPASPGEGKEDAFSKLKEKFMNELHKIPLP. Residue Asn25 is glycosylated (N-linked (GlcNAc...) asparagine). Residues 58 to 80 traverse the membrane as a helical segment; the sequence is PWALIAIAIVAVLLVLTCCFCIC. S-palmitoyl cysteine attachment occurs at residues Cys75, Cys76, Cys78, Cys80, and Cys83. Over 81 to 422 the chain is Cytoplasmic; it reads KKCLFKKKNK…EVDAMLAVKK (342 aa). The segment at 113 to 142 is disordered; sequence TMKDQALKDDDAETGLTDGEEKEEPKEEEK. Residues 122-134 show a composition bias toward acidic residues; it reads DDAETGLTDGEEK. The residue at position 129 (Thr129) is a Phosphothreonine. The phospholipid binding stretch occupies residues 136–382; sequence EPKEEEKLGK…AIGKVFVGYN (247 aa). Positions 142-261 constitute a C2 1 domain; the sequence is KLGKLQYSLD…DFGHVTEEWR (120 aa). Ca(2+)-binding residues include Leu172, Asp173, and Asp179. At Tyr230 the chain carries Phosphotyrosine. Ca(2+)-binding residues include Asp231, Phe232, Asp233, Ser236, Lys237, and Asp239. Position 265 is a phosphoserine (Ser265). The C2 2 domain maps to 273 to 406; sequence KLGDICFSLR…NPRRPIAQWH (134 aa). The Ca(2+) site is built by Asp304 and Asp310. Ser343 and Ser345 each carry phosphoserine. Ca(2+) is bound by residues Asp364, Asp366, and Asp372.

This sequence belongs to the synaptotagmin family. Homotetramer. Heterodimer; heterodimerizes with SYT2 in presence of calcium. Interacts with SCAMP5. Interacts with STON2. Forms a complex with SV2B, syntaxin 1 and SNAP25. Interacts with SV2A, SV2B and SV2C. Interacts with RIMS1. Interacts with PRRT2. Interacts with DNAJC5 in a phosphorylation-dependent manner. Interacts (via N-terminus) with RAB3A. Interacts with SYT12. Interacts with calmodulin. Interacts with DNM1 (via C-terminal proline-rich domain (PRD)); this interaction facilitates vesicle fission during clathrin-mediated endocytosis (CME). The cofactor is Ca(2+). Glycosylated. In terms of tissue distribution, expressed in melanocytes.

The protein resides in the cytoplasmic vesicle. It localises to the secretory vesicle membrane. It is found in the secretory vesicle. Its subcellular location is the synaptic vesicle membrane. The protein localises to the chromaffin granule membrane. The protein resides in the cytoplasm. Calcium sensor that participates in triggering neurotransmitter release at the synapse. May have a regulatory role in the membrane interactions during trafficking of synaptic vesicles at the active zone of the synapse. It binds acidic phospholipids with a specificity that requires the presence of both an acidic head group and a diacyl backbone. A Ca(2+)-dependent interaction between synaptotagmin and putative receptors for activated protein kinase C has also been reported. It can bind to at least three additional proteins in a Ca(2+)-independent manner; these are neurexins, syntaxin and AP2. Plays a role in dendrite formation by melanocytes. This chain is Synaptotagmin-1, found in Homo sapiens (Human).